The primary structure comprises 488 residues: Probable G-protein coupled receptor Mth-like 12 (488 aa).

The first 17 residues, 1–17, serve as a signal peptide directing secretion; sequence MFLWLKCFCTLIIVTIA. The Extracellular segment spans residues 18–215; it reads KNSSAKIPHC…NRRCYRNVMP (198 aa). N-linked (GlcNAc...) asparagine glycans are attached at residues Asn-19, Asn-34, and Asn-55. Intrachain disulfides connect Cys-27/Cys-81, Cys-83/Cys-88, Cys-92/Cys-189, Cys-93/Cys-104, and Cys-155/Cys-209. An N-linked (GlcNAc...) asparagine glycan is attached at Asn-141. The chain crosses the membrane as a helical span at residues 216–236; the sequence is GIAQLSVISVVGFILTLAVYL. Topologically, residues 237–247 are cytoplasmic; that stretch reads SVEKLRNLLGK. The helical transmembrane segment at 248–268 threads the bilayer; it reads CLICSLFSMFMEYFIWTMDYF. Residues 269-283 lie on the Extracellular side of the membrane; that stretch reads RLLQSICSAAGYMKY. Residues 284–304 form a helical membrane-spanning segment; the sequence is FFSMSSYLWFSVVSFHLWELF. Residues 305 to 315 lie on the Cytoplasmic side of the membrane; the sequence is TSLNRHEPQYR. The chain crosses the membrane as a helical span at residues 316–336; sequence FLIYNTFVWCTAAIPTVVIFS. Over 337–373 the chain is Extracellular; sequence MNQMWENDPGKSEWLPLVGYFGCSVKDWNSSSWFYSH. N-linked (GlcNAc...) asparagine glycosylation occurs at Asn-365. The chain crosses the membrane as a helical span at residues 374–394; that stretch reads IPIVILNSFNVIMFVLTAIYI. Residues 395–416 lie on the Cytoplasmic side of the membrane; sequence WKVKKGVKSFAQHDERNTTCLE. A helical membrane pass occupies residues 417-437; that stretch reads FNVQTYIQFVRLFLIMGASWL. Residues 438 to 454 lie on the Extracellular side of the membrane; sequence LDQLTRLAEDSHLLLDT. A helical membrane pass occupies residues 455 to 475; that stretch reads IVLNLTVYLNAAFGILIFVLL. The Cytoplasmic portion of the chain corresponds to 476 to 488; the sequence is ILKGSTFKMIMER.

It belongs to the G-protein coupled receptor 2 family. Mth subfamily.

It localises to the cell membrane. This Drosophila melanogaster (Fruit fly) protein is Probable G-protein coupled receptor Mth-like 12 (mthl12).